Consider the following 171-residue polypeptide: Cyclin-dependent kinase inhibitor 2A (171 aa).

Residues 33–42 (ASMHTKHESE) show a composition bias toward basic and acidic residues. A disordered region spans residues 33-52 (ASMHTKHESEESFSGEKLTE). ANK repeat units lie at residues 45-74 (FSGE…NPNA), 78-106 (FGRS…EPNT), and 111-140 (TLTL…RLDV).

This sequence belongs to the CDKN2 cyclin-dependent kinase inhibitor family. Heterodimer with CDK4 or CDK6. Predominamt P16 complexes contained CDK6. Interacts with CDK4 (both 'T-172'-phosphorylated and non-phosphorylated forms); the interaction inhibits cyclin D-CDK4 kinase activity. Interacts with ISCO2. As to expression, expressed predominantly in lung and testis. In the testis, restricted to germ cells in the seminiferous epithelium. Not detected in premeiotic spermatogonia but high levels found in postmeiotic spermatids. In primary tumors, low levels detected in melanocytic hyperplasias. Higher levels found in non-metastatic and metastatic melanomas.

It localises to the cytoplasm. The protein resides in the nucleus. Functionally, acts as a negative regulator of the proliferation of normal cells by interacting strongly with CDK4 and CDK6. This inhibits their ability to interact with cyclins D and to phosphorylate the retinoblastoma protein. This Monodelphis domestica (Gray short-tailed opossum) protein is Cyclin-dependent kinase inhibitor 2A.